The chain runs to 428 residues: Serine--tRNA ligase (428 aa).

235–237 (TAE) is an L-serine binding site. 266–268 (RSE) contributes to the ATP binding site. Residue E289 participates in L-serine binding. Residue 353–356 (EISS) participates in ATP binding. S389 serves as a coordination point for L-serine.

It belongs to the class-II aminoacyl-tRNA synthetase family. Type-1 seryl-tRNA synthetase subfamily. Homodimer. The tRNA molecule binds across the dimer.

It localises to the cytoplasm. It catalyses the reaction tRNA(Ser) + L-serine + ATP = L-seryl-tRNA(Ser) + AMP + diphosphate + H(+). The enzyme catalyses tRNA(Sec) + L-serine + ATP = L-seryl-tRNA(Sec) + AMP + diphosphate + H(+). The protein operates within aminoacyl-tRNA biosynthesis; selenocysteinyl-tRNA(Sec) biosynthesis; L-seryl-tRNA(Sec) from L-serine and tRNA(Sec): step 1/1. Its function is as follows. Catalyzes the attachment of serine to tRNA(Ser). Is also able to aminoacylate tRNA(Sec) with serine, to form the misacylated tRNA L-seryl-tRNA(Sec), which will be further converted into selenocysteinyl-tRNA(Sec). This chain is Serine--tRNA ligase, found in Shewanella woodyi (strain ATCC 51908 / MS32).